The following is a 129-amino-acid chain: MIGTSSLYQLLKITFFFYPYATVLKVGKVGVVVRIVDGAFGPVSLLFWLLGWKIPSKRVPSSNSCGLDTKSPAKNGAMSIKRSTPSITKYREKYFETILLLNALCFRVKILLCAIILLGFIQNSTIVCQ.

Transmembrane regions (helical) follow at residues Ile-35–Pro-55 and Ile-98–Leu-118.

Its subcellular location is the membrane. This is an uncharacterized protein from Saccharomyces cerevisiae (strain ATCC 204508 / S288c) (Baker's yeast).